A 227-amino-acid polypeptide reads, in one-letter code: Cytidylate kinase (227 aa).

12–20 (GPSGAGKGT) lines the ATP pocket.

Belongs to the cytidylate kinase family. Type 1 subfamily.

The protein resides in the cytoplasm. It catalyses the reaction CMP + ATP = CDP + ADP. The enzyme catalyses dCMP + ATP = dCDP + ADP. This is Cytidylate kinase from Xanthomonas axonopodis pv. citri (strain 306).